The primary structure comprises 290 residues: Nucleotide-binding protein FN1089 (290 aa).

ATP is bound at residue Gly-11 to Thr-18. Asp-56–Thr-59 serves as a coordination point for GTP.

Belongs to the RapZ-like family.

Displays ATPase and GTPase activities. In Fusobacterium nucleatum subsp. nucleatum (strain ATCC 25586 / DSM 15643 / BCRC 10681 / CIP 101130 / JCM 8532 / KCTC 2640 / LMG 13131 / VPI 4355), this protein is Nucleotide-binding protein FN1089.